Reading from the N-terminus, the 861-residue chain is Probable linoleate 9S-lipoxygenase 8 (861 aa).

The PLAT domain occupies 33–160; sequence FTDLASSLTG…NYKSDRIFFA (128 aa). Residues 163–861 form the Lipoxygenase domain; sequence PYLPSETPEL…GKGIPNSVSI (699 aa). A disordered region spans residues 220 to 245; it reads TLGGSAEYPYPRRGRTGRPPTRTDPK. 5 residues coordinate Fe cation: His522, His527, His713, Asn717, and Ile861.

The protein belongs to the lipoxygenase family. In terms of assembly, monomer. The cofactor is Fe cation.

It is found in the cytoplasm. It catalyses the reaction (9Z,12Z)-octadecadienoate + O2 = (9S)-hydroperoxy-(10E,12Z)-octadecadienoate. It functions in the pathway lipid metabolism; oxylipin biosynthesis. Functionally, plant lipoxygenases may be involved in a number of diverse aspects of plant physiology including growth and development, pest resistance, and senescence or responses to wounding. Catalyzes the hydroperoxidation of lipids containing a cis,cis-1,4-pentadiene structure. The protein is Probable linoleate 9S-lipoxygenase 8 (LOX1.8) of Solanum tuberosum (Potato).